We begin with the raw amino-acid sequence, 128 residues long: Putative pre-16S rRNA nuclease (128 aa).

This sequence belongs to the YqgF nuclease family.

The protein localises to the cytoplasm. Its function is as follows. Could be a nuclease involved in processing of the 5'-end of pre-16S rRNA. The polypeptide is Putative pre-16S rRNA nuclease (Campylobacter lari (strain RM2100 / D67 / ATCC BAA-1060)).